A 567-amino-acid polypeptide reads, in one-letter code: Geraniol synthase, chloroplastic (567 aa).

The N-terminal 63 residues, 1 to 63 (MSCARITVTL…GDNSQRKNTR (63 aa)), are a transit peptide targeting the chloroplast. A disordered region spans residues 48–75 (STPLINGDNSQRKNTRQHMEESSSKRRE). The span at 64 to 75 (QHMEESSSKRRE) shows a compositional bias: basic and acidic residues. (2E)-geranyl diphosphate-binding residues include arginine 286, aspartate 323, aspartate 327, arginine 466, and aspartate 469. Mn(2+)-binding residues include aspartate 323 and aspartate 327. Positions 323–327 (DDIFD) match the DDXXD motif motif. The Mn(2+) site is built by aspartate 469, threonine 473, and glutamate 477.

This sequence belongs to the terpene synthase family. Tpsb subfamily. In terms of assembly, homodimer. Mn(2+) is required as a cofactor. Expressed in the peltate glandular trichomes of the leaves.

Its subcellular location is the plastid. It is found in the chloroplast. It catalyses the reaction (2E)-geranyl diphosphate + H2O = (2E)-geraniol + diphosphate. The protein operates within secondary metabolite biosynthesis; terpenoid biosynthesis. Its function is as follows. Monoterpene synthase that catalyzes the formation of geraniol from geranyl diphosphate. The chain is Geraniol synthase, chloroplastic (GES) from Ocimum basilicum (Sweet basil).